The primary structure comprises 357 residues: Phenylalanine--tRNA ligase alpha subunit (357 aa).

Glu-257 contacts Mg(2+).

The protein belongs to the class-II aminoacyl-tRNA synthetase family. Phe-tRNA synthetase alpha subunit type 1 subfamily. In terms of assembly, tetramer of two alpha and two beta subunits. The cofactor is Mg(2+).

It is found in the cytoplasm. The enzyme catalyses tRNA(Phe) + L-phenylalanine + ATP = L-phenylalanyl-tRNA(Phe) + AMP + diphosphate + H(+). In Roseobacter denitrificans (strain ATCC 33942 / OCh 114) (Erythrobacter sp. (strain OCh 114)), this protein is Phenylalanine--tRNA ligase alpha subunit.